Here is a 522-residue protein sequence, read N- to C-terminus: Sulfite reductase [NADPH] flavoprotein alpha-component (522 aa).

One can recognise a Flavodoxin-like domain in the interval 60-198 (ITILFGSQTG…DTERWSSDAL (139 aa)). Residues 217–242 (TLRSHQDLRSHQEQSRNRARPYDKDN) form a disordered region. A compositionally biased stretch (basic and acidic residues) spans 220–242 (SHQDLRSHQEQSRNRARPYDKDN). Residues 241-399 (DNPYTATLLE…VAPYRAFLQQ (159 aa)) enclose the FAD-binding FR-type domain.

As to quaternary structure, alpha(8)-beta(8). The alpha component is a flavoprotein, the beta component is a hemoprotein. FAD serves as cofactor. FMN is required as a cofactor.

It catalyses the reaction hydrogen sulfide + 3 NADP(+) + 3 H2O = sulfite + 3 NADPH + 4 H(+). Its function is as follows. Catalyzes the 6-electron reduction of sulfite to sulfide. This is one of several activities required for the biosynthesis of L-cysteine from sulfate. The flavo-protein component catalyzes the electron flow from NADPH -&gt; FAD -&gt; FMN to the hemoprotein component. In Thiocapsa roseopersicina, this protein is Sulfite reductase [NADPH] flavoprotein alpha-component (cysJ).